Consider the following 499-residue polypeptide: DNA-directed RNA polymerase subunit Rpo2N (499 aa).

It belongs to the RNA polymerase beta chain family. Part of the RNA polymerase complex.

The protein resides in the cytoplasm. The enzyme catalyses RNA(n) + a ribonucleoside 5'-triphosphate = RNA(n+1) + diphosphate. DNA-dependent RNA polymerase (RNAP) catalyzes the transcription of DNA into RNA using the four ribonucleoside triphosphates as substrates. The Rpo2 subunit (Rpo2N and Rpo2C in this organism) is implicated in DNA promoter recognition and in nucleotide binding. This Methanococcus vannielii (strain ATCC 35089 / DSM 1224 / JCM 13029 / OCM 148 / SB) protein is DNA-directed RNA polymerase subunit Rpo2N.